The chain runs to 217 residues: Adenylate kinase (217 aa).

11-16 (GAGKGT) contributes to the ATP binding site. Residues 31 to 60 (STGDMFREAMANETPVGLEAKSYIDKGNLV) form an NMP region. AMP-binding positions include Thr32, Arg37, 58–60 (NLV), 86–89 (GFPR), and Gln93. Residues 127–165 (ARYICKKCGATYNKISNPTKVEGTCDRCGGHEFFQREDD) form an LID region. Residue Arg128 participates in ATP binding. The Zn(2+) site is built by Cys131 and Cys134. Residue 137–138 (TY) participates in ATP binding. Positions 151 and 154 each coordinate Zn(2+). Residues Arg162 and Arg173 each contribute to the AMP site. Gln201 serves as a coordination point for ATP.

The protein belongs to the adenylate kinase family. Monomer.

The protein localises to the cytoplasm. It carries out the reaction AMP + ATP = 2 ADP. It functions in the pathway purine metabolism; AMP biosynthesis via salvage pathway; AMP from ADP: step 1/1. Functionally, catalyzes the reversible transfer of the terminal phosphate group between ATP and AMP. Plays an important role in cellular energy homeostasis and in adenine nucleotide metabolism. This is Adenylate kinase from Lactobacillus johnsonii (strain CNCM I-12250 / La1 / NCC 533).